A 50-amino-acid chain; its full sequence is CGDINAPCQSDCDCCGYSVTCDCYWSKDCKCRESNFVIGMALRKAFCKNK.

5 disulfides stabilise this stretch: Cys-1–Cys-15, Cys-8–Cys-21, Cys-12–Cys-47, Cys-14–Cys-31, and Cys-23–Cys-29.

Expressed by the venom gland.

The protein localises to the secreted. Insecticidal neurotoxin that reversibly inhibits the N-methyl-D-aspartate (NMDA)-subtype of ionotropic glutamate receptor (GRIN) and inhibits inactivation of insect sodium channels (Nav). In vivo, is highly toxic to insects. The sequence is that of U2-ctenitoxin-Pk1a from Phoneutria keyserlingi (Brazilian wandering spider).